We begin with the raw amino-acid sequence, 292 residues long: Tyrosine isonitrile desaturase (292 aa).

Fe cation is bound by residues His-110, Asp-112, and His-259.

The protein belongs to the TfdA dioxygenase family. Requires Fe(2+) as cofactor.

The enzyme catalyses (2S)-3-(4-hydroxyphenyl)-2-isocyanopropanoate + 2-oxoglutarate + O2 = (2E)-3-(4-hydroxyphenyl)-2-isocyanoprop-2-enoate + succinate + CO2 + H2O. Its function is as follows. Catalyzes the 2-oxoglutarate-dependent oxidation of tyrosine isonitrile. This Erwinia amylovora (strain CFBP1430) protein is Tyrosine isonitrile desaturase.